The chain runs to 135 residues: MKNAGPSQRQLRVGEQVRHAVAYKLQQGILLDDLLKNIVISVAEVRMSPDLKIATCFVSSLSTLHNVSPTDVVNVLNKHSRFIRREISYSLRQMKYMPELRFRLDTSFDNFSKIDSLLRSPEVARDLHHNDEFKD.

The protein belongs to the RbfA family. In terms of assembly, monomer. Binds 30S ribosomal subunits, but not 50S ribosomal subunits or 70S ribosomes.

The protein localises to the cytoplasm. One of several proteins that assist in the late maturation steps of the functional core of the 30S ribosomal subunit. Associates with free 30S ribosomal subunits (but not with 30S subunits that are part of 70S ribosomes or polysomes). Required for efficient processing of 16S rRNA. May interact with the 5'-terminal helix region of 16S rRNA. This Bartonella quintana (strain Toulouse) (Rochalimaea quintana) protein is Ribosome-binding factor A.